A 312-amino-acid polypeptide reads, in one-letter code: DNA-directed RNA polymerase subunit alpha (312 aa).

Residues 1 to 226 (MIEFEKPIIT…EHLNLFTDLT (226 aa)) are alpha N-terminal domain (alpha-NTD). Residues 243–312 (DEKVLDRTIE…DLGLGLKNDK (70 aa)) are alpha C-terminal domain (alpha-CTD).

It belongs to the RNA polymerase alpha chain family. Homodimer. The RNAP catalytic core consists of 2 alpha, 1 beta, 1 beta' and 1 omega subunit. When a sigma factor is associated with the core the holoenzyme is formed, which can initiate transcription.

The enzyme catalyses RNA(n) + a ribonucleoside 5'-triphosphate = RNA(n+1) + diphosphate. DNA-dependent RNA polymerase catalyzes the transcription of DNA into RNA using the four ribonucleoside triphosphates as substrates. This is DNA-directed RNA polymerase subunit alpha from Streptococcus pyogenes serotype M1.